The chain runs to 471 residues: Glutamate--tRNA ligase (471 aa).

A 'HIGH' region motif is present at residues 9–19; it reads PSPTGYLHVGG. Zn(2+)-binding residues include Cys98, Cys100, Cys125, and His127. The short motif at 237–241 is the 'KMSKS' region element; the sequence is KLSKR. Residue Lys240 participates in ATP binding.

It belongs to the class-I aminoacyl-tRNA synthetase family. Glutamate--tRNA ligase type 1 subfamily. In terms of assembly, monomer. Requires Zn(2+) as cofactor.

It is found in the cytoplasm. It carries out the reaction tRNA(Glu) + L-glutamate + ATP = L-glutamyl-tRNA(Glu) + AMP + diphosphate. Functionally, catalyzes the attachment of glutamate to tRNA(Glu) in a two-step reaction: glutamate is first activated by ATP to form Glu-AMP and then transferred to the acceptor end of tRNA(Glu). The sequence is that of Glutamate--tRNA ligase from Shigella sonnei (strain Ss046).